Consider the following 150-residue polypeptide: FAD synthase (150 aa).

ATP-binding positions include 11 to 12, 16 to 19, Asp-96, and Tyr-124; these read TF and HPGH.

The protein belongs to the archaeal FAD synthase family. As to quaternary structure, homodimer. It depends on a divalent metal cation as a cofactor.

It catalyses the reaction FMN + ATP + H(+) = FAD + diphosphate. It participates in cofactor biosynthesis; FAD biosynthesis; FAD from FMN: step 1/1. Functionally, catalyzes the transfer of the AMP portion of ATP to flavin mononucleotide (FMN) to produce flavin adenine dinucleotide (FAD) coenzyme. The sequence is that of FAD synthase from Methanococcus maripaludis (strain C5 / ATCC BAA-1333).